Reading from the N-terminus, the 155-residue chain is 6,7-dimethyl-8-ribityllumazine synthase (155 aa).

Residues Phe-26, 60–62 (ALE), and 84–86 (AVI) contribute to the 5-amino-6-(D-ribitylamino)uracil site. Position 89–90 (89–90 (ET)) interacts with (2S)-2-hydroxy-3-oxobutyl phosphate. Residue His-92 is the Proton donor of the active site. Residue Asn-117 participates in 5-amino-6-(D-ribitylamino)uracil binding. Arg-131 provides a ligand contact to (2S)-2-hydroxy-3-oxobutyl phosphate.

This sequence belongs to the DMRL synthase family.

The catalysed reaction is (2S)-2-hydroxy-3-oxobutyl phosphate + 5-amino-6-(D-ribitylamino)uracil = 6,7-dimethyl-8-(1-D-ribityl)lumazine + phosphate + 2 H2O + H(+). It participates in cofactor biosynthesis; riboflavin biosynthesis; riboflavin from 2-hydroxy-3-oxobutyl phosphate and 5-amino-6-(D-ribitylamino)uracil: step 1/2. Catalyzes the formation of 6,7-dimethyl-8-ribityllumazine by condensation of 5-amino-6-(D-ribitylamino)uracil with 3,4-dihydroxy-2-butanone 4-phosphate. This is the penultimate step in the biosynthesis of riboflavin. This chain is 6,7-dimethyl-8-ribityllumazine synthase, found in Chromobacterium violaceum (strain ATCC 12472 / DSM 30191 / JCM 1249 / CCUG 213 / NBRC 12614 / NCIMB 9131 / NCTC 9757 / MK).